A 640-amino-acid polypeptide reads, in one-letter code: MKITFPDGAVKEFEPGVSTADIAASISPGLKKKALAGKLNGELLDLVTPIHEDGAIEIVTPDHEDALGILRHSTAHLMAQALKRLYPDVKFGVGPAIESGFYYDIDTEAVISDESLVEIEKEMQKIVRENVPIEREVVSREEAIKRFKAIGDQYKLELIEAIPEDETVTIYTQGEFFDLCRGVHVPSTGKIQVFKLLSVAGAYWRGDSNNKMLQRIYGTAFFDKNGLKEFIQMQKEAKERDHRKLGKELELFTNSIEVGQGLPLWLPKGATIRRVIERYIVDKEERLGYNHVYTPIMANVELYKTSGHWDHYHEDMFPTMKMDNEELVLRPMNCPHHMMIYKNDIHSYRELPIRIAELGMMHRYEMSGALSGLQRVRGMTLNDAHVFVRPDQIKDEFKRVVELILEVYKDFDITDYSFRLSYRDPKNTEKYFDDDAMWEKAQAMLKSAMDEMEMDYFEAEGEAAFYGPKLDVQVKTAIGKEETLSTVQLDFLLPERFDLTYIGEDGEKHRPVVIHRGVVSTMERFVAYLIEEYKGAFPTWLAPVQMEIIPVNADAHLDYAKGVQDKLQRAGLRAEVDDRNEKLGYKIREAQTKKIPYALVLGDQEVEAGSVNVRRYGSKDSETMDLDAFIAQVVAEVSKY.

Positions Met-1–Thr-60 constitute a TGS domain. The catalytic stretch occupies residues Asp-241 to Pro-538. Residues Cys-334, His-385, and His-515 each contribute to the Zn(2+) site.

The protein belongs to the class-II aminoacyl-tRNA synthetase family. Homodimer. Requires Zn(2+) as cofactor.

The protein resides in the cytoplasm. It carries out the reaction tRNA(Thr) + L-threonine + ATP = L-threonyl-tRNA(Thr) + AMP + diphosphate + H(+). Catalyzes the attachment of threonine to tRNA(Thr) in a two-step reaction: L-threonine is first activated by ATP to form Thr-AMP and then transferred to the acceptor end of tRNA(Thr). Also edits incorrectly charged L-seryl-tRNA(Thr). In Listeria monocytogenes serovar 1/2a (strain ATCC BAA-679 / EGD-e), this protein is Threonine--tRNA ligase.